The following is a 423-amino-acid chain: Nucleoporin NUP42 (423 aa).

The C3H1-type zinc finger occupies 1–25; it reads MAICQFFLQGRCRFGDRCWNEHPGA. An FG 1 repeat occupies 14 to 15; sequence FG. The disordered stretch occupies residues 24–85; that stretch reads GARGAGGGRQ…EKPYFSSFDS (62 aa). Over residues 40–69 the composition is skewed to polar residues; the sequence is SGNNRRGWNTTSQRYSNVIQPSSFSKSTPW. The tract at residues 94–170 is interaction with HIV-1 Vpr; the sequence is GFGLSENPFA…EYHNFLTSNN (77 aa). The FG 2 repeat unit spans residues 95-96; sequence FG. The residue at position 106 (S106) is a Phosphoserine. FG repeat units follow at residues 218–219, 220–221, 265–266, 271–272, 288–289, 290–291, 311–312, 336–337, 345–346, and 364–365; these read FG. Positions 365 to 423 are interaction with GLE1; sequence GNSSISTSLSASSSIIATDNVLFTPRDKLTVEELEQFQSKKFTLGKIPLKPPPLELLNV.

In terms of assembly, probable component of the nuclear pore complex (NPC). Interacts with nuclear export protein NXF1. Interacts with GLE1. Able to form a heterotrimer with NUP155 and GLE1 in vitro. Interacts with XPO1. (Microbial infection) Interacts with the HIV-1 virus proteins Rev and Vpr. The interaction with HIV-1 Rev, a protein that mediates nuclear export of unspliced viral RNAs, suggests that its function may be bypassed by the HIV-1 virus. In terms of processing, O-glycosylated. In terms of tissue distribution, ubiquitously expressed.

It localises to the nucleus. It is found in the nuclear pore complex. Its subcellular location is the nucleus membrane. In terms of biological role, required for the export of mRNAs containing poly(A) tails from the nucleus into the cytoplasm. Functionally, (Microbial infection) In case of infection by HIV-1, it may participate in the docking of viral Vpr at the nuclear envelope. This chain is Nucleoporin NUP42, found in Homo sapiens (Human).